We begin with the raw amino-acid sequence, 392 residues long: Probable protein phosphatase 2C 29 (392 aa).

Residues 44–353 enclose the PPM-type phosphatase domain; it reads DYSVAVAQAN…DDITVVVLFL (310 aa). D75, G76, D285, and D344 together coordinate Mn(2+). Residues 360–392 are disordered; sequence AGRGDEIDGTDGPVDVFSLSPDDREDPTRPVLR.

It belongs to the PP2C family. Mg(2+) serves as cofactor. Requires Mn(2+) as cofactor.

The catalysed reaction is O-phospho-L-seryl-[protein] + H2O = L-seryl-[protein] + phosphate. It catalyses the reaction O-phospho-L-threonyl-[protein] + H2O = L-threonyl-[protein] + phosphate. The sequence is that of Probable protein phosphatase 2C 29 from Oryza sativa subsp. japonica (Rice).